Consider the following 311-residue polypeptide: Malate dehydrogenase (311 aa).

NAD(+) contacts are provided by residues 7–13 (GAAGGIG) and Asp-34. Residues Arg-81 and Arg-87 each coordinate substrate. Residues Asn-94 and 117–119 (ITN) contribute to the NAD(+) site. 2 residues coordinate substrate: Asn-119 and Arg-153. The active-site Proton acceptor is His-177. Met-227 lines the NAD(+) pocket.

The protein belongs to the LDH/MDH superfamily. MDH type 1 family. As to quaternary structure, homodimer.

It carries out the reaction (S)-malate + NAD(+) = oxaloacetate + NADH + H(+). Its function is as follows. Catalyzes the reversible oxidation of malate to oxaloacetate. The sequence is that of Malate dehydrogenase from Shewanella sediminis (strain HAW-EB3).